The primary structure comprises 754 residues: Phosphoinositide 3-kinase regulatory subunit 6 (754 aa).

The disordered stretch occupies residues Glu-343–Arg-363.

Heterodimer of a catalytic subunit (PIK3CG) and a regulatory (PIK3R6) subunit. The binding of PIK3R6 to PIK3CG may exclude the binding of PIK3R5 to PIK3CG. Interacts with beta-gamma G protein dimers. Interacts with PDE3B and RAPGEF3; form a signaling complex that regulates phosphatidylinositol 3-kinase gamma in angiogenesis.

It is found in the cytoplasm. The protein resides in the cell membrane. Functionally, regulatory subunit of the PI3K gamma complex. Acts as an adapter to drive activation of PIK3CG by beta-gamma G protein dimers. The PIK3CG:PIK3R6 heterodimer is much less sensitive to beta-gamma G protein dimers than PIK3CG:PIK3R5 and its membrane recruitment and beta-gamma G protein dimer-dependent activation requires HRAS bound to PIK3CG. Recruits of the PI3K gamma complex to a PDE3B:RAPGEF3 signaling complex involved in angiogenesis; signaling seems to involve RRAS. The protein is Phosphoinositide 3-kinase regulatory subunit 6 (PIK3R6) of Homo sapiens (Human).